A 1377-amino-acid polypeptide reads, in one-letter code: Zinc finger MYM-type protein 2 (1377 aa).

Glycyl lysine isopeptide (Lys-Gly) (interchain with G-Cter in SUMO2) cross-links involve residues Lys-48, Lys-88, Lys-98, and Lys-104. Composition is skewed to polar residues over residues 85–115 (TSSKNEELQGNDSKITPSSKELASQKGSVSE) and 127–138 (TNQGQEKNSSNF). The tract at residues 85-177 (TSSKNEELQG…GMGNSGITTE (93 aa)) is disordered. The span at 139–152 (IERRPPETKNRTND) shows a compositional bias: basic and acidic residues. Lys-147 is covalently cross-linked (Glycyl lysine isopeptide (Lys-Gly) (interchain with G-Cter in SUMO2)). Residues 153-164 (VDFSTSSFSRSK) are compositionally biased toward polar residues. Ser-159 bears the Phosphoserine mark. Residues Lys-253 and Lys-297 each participate in a glycyl lysine isopeptide (Lys-Gly) (interchain with G-Cter in SUMO2) cross-link. The interval 273 to 305 (NGESATHHNPDSWISQSASFPRNQKQPGVDSLS) is disordered. A compositionally biased stretch (polar residues) spans 284-298 (SWISQSASFPRNQKQ). At Ser-305 the chain carries Phosphoserine. Residues Lys-312, Lys-325, Lys-348, and Lys-366 each participate in a glycyl lysine isopeptide (Lys-Gly) (interchain with G-Cter in SUMO2) cross-link. The segment at 327-363 (VKVTCANCKKPLQKGQTAYQRKGSAHLFCSTTCLSSF) adopts an MYM-type 1 zinc-finger fold. Residues 369 to 409 (PKKLCVMCKKDITTMKGTIVAQVDSSESFQEFCSTSCLSLY) form an MYM-type 2 zinc finger. Glycyl lysine isopeptide (Lys-Gly) (interchain with G-Cter in SUMO2) cross-links involve residues Lys-417, Lys-441, Lys-491, Lys-503, Lys-513, Lys-529, and Lys-532. 2 consecutive MYM-type zinc fingers follow at residues 421–456 (NKSRCTICGKLTEIRHEVSFKNMTHKLCSDHCFNRY) and 463–502 (IMNCCEQCGEYLPSKGAGNNVLVIDGQQKRFCCQSCVSEY). The MYM-type 5 zinc finger occupies 533–570 (LTTCTGCRTQCRFFDMTQCIGPNGYMEPYCSTACMNSH). Residues Lys-576, Lys-603, Lys-649, Lys-658, Lys-688, Lys-700, and Lys-709 each participate in a glycyl lysine isopeptide (Lys-Gly) (interchain with G-Cter in SUMO2) cross-link. The MYM-type 6 zinc-finger motif lies at 636 to 671 (QLKCNYCKNSFCSKPEILEWENKVHQFCSKTCSDDY). 2 consecutive MYM-type zinc fingers follow at residues 723 to 758 (RCVTCNYCSQLCKKGATKELDGVVRDFCSEDCCKKF) and 764 to 799 (KAARCDCCKSQGTLKERVQWRGEMKHFCDQHCLLRF). Glycyl lysine isopeptide (Lys-Gly) (interchain with G-Cter in SUMO2) cross-links involve residues Lys-764, Lys-788, Lys-812, and Lys-829. Residues Ser-838 and Ser-958 each carry the phosphoserine modification. Disordered regions lie at residues 983 to 1002 (LLKNSDPETQSSMPDVPYEP) and 1028 to 1064 (VFGEEYEEQPRPRSKKKGAKRKAVSGYQSHDDSSDNS). Positions 1039-1050 (PRSKKKGAKRKA) are enriched in basic residues. Ser-1064 carries the phosphoserine modification. Thr-1376 bears the Phosphothreonine mark.

In terms of assembly, may be a component of a BHC histone deacetylase complex that contains HDAC1, HDAC2, HMG20B/BRAF35, KDM1A, RCOR1/CoREST, PHF21A/BHC80, ZNF198, ZNF217, ZMYM3, GSE1 and GTF2I.

It is found in the nucleus. Functionally, may function as a transcription factor. The chain is Zinc finger MYM-type protein 2 (ZMYM2) from Pongo abelii (Sumatran orangutan).